Reading from the N-terminus, the 288-residue chain is Prohibitin-2 (288 aa).

Residues 21-43 traverse the membrane as a helical; Signal-anchor for type II membrane protein segment; the sequence is GKYAFTGTGLLLALGLAGFAVQT. The AIM signature appears at 125–128; sequence YRTL.

This sequence belongs to the prohibitin family. The mitochondrial prohibitin complex consists of two subunits (phb1 and phb2). The subunits assemble into a membrane-associated ring-shaped supercomplex of approximately 1 mDa.

It localises to the mitochondrion inner membrane. In terms of biological role, prohibitin probably acts as a holdase/unfoldase for the stabilization of newly synthesized mitochondrial proteins. Involved in mitophagy; may act as an adapter for atg8 that supports mitophagosome assembly. Negatively regulates the proteolytic processing of atg32 via the i-AAA protease. Acts as a negative regulator of the m-AAA protease. The sequence is that of Prohibitin-2 (phb2) from Schizosaccharomyces pombe (strain 972 / ATCC 24843) (Fission yeast).